A 312-amino-acid polypeptide reads, in one-letter code: Olfactory receptor-like protein COR2 (312 aa).

At 1–26 (MASGNCTTPTTFILSGLTDNPRLQMP) the chain is on the extracellular side. A glycan (N-linked (GlcNAc...) asparagine) is linked at Asn5. Residues 27-49 (LFMVFLVIYTTTLLTNLGLIALI) traverse the membrane as a helical segment. The Cytoplasmic segment spans residues 50–57 (GMDLHLQT). A helical membrane pass occupies residues 58 to 79 (PMYIFLQNLSFTDAAYSTVITP). Over 80 to 100 (KMLATFLEERRTISYVGCILQ) the chain is Extracellular. A disulfide bridge connects residues Cys97 and Cys179. A helical transmembrane segment spans residues 101–120 (YFSFVLLTTSEWLLLAVMAY). The Cytoplasmic portion of the chain corresponds to 121–139 (DRYVAICKPLLYPSIMTKA). A helical transmembrane segment spans residues 140 to 164 (VCWRLVKGLYSLAFLNSLVHTSGLL). Over 165–205 (KLSFCSSNVVNHFFCDNRPLFQISSSSTTLNELLVIISGSL) the chain is Extracellular. A helical transmembrane segment spans residues 206–226 (FVMSSIITILISYVFIILTVV). Over 227–239 (MIRSKDGKYKAFS) the chain is Cytoplasmic. The helical transmembrane segment at 240-260 (TCTSHLMAVSLFHGTVIFMYL) threads the bilayer. Topologically, residues 261–271 (RSVKLFSLDTD) are extracellular. The helical transmembrane segment at 272–292 (KIASLFYTVVIPMLNPLIYSW) threads the bilayer. The Cytoplasmic portion of the chain corresponds to 293 to 312 (RNKEVKDALRRLTATSVWLH).

This sequence belongs to the G-protein coupled receptor 1 family.

Its subcellular location is the cell membrane. In terms of biological role, odorant receptor. This is Olfactory receptor-like protein COR2 (COR2) from Gallus gallus (Chicken).